The chain runs to 230 residues: ATP-dependent dethiobiotin synthetase BioD (230 aa).

12–17 (DVGKTV) provides a ligand contact to ATP. A Mg(2+)-binding site is contributed by Thr-16. Lys-37 is an active-site residue. Thr-41 lines the substrate pocket. ATP is bound by residues Asp-49, 108-111 (EGAG), 168-169 (GS), and 198-200 (PEG). 2 residues coordinate Mg(2+): Asp-49 and Glu-108.

This sequence belongs to the dethiobiotin synthetase family. As to quaternary structure, homodimer. Requires Mg(2+) as cofactor.

It localises to the cytoplasm. It catalyses the reaction (7R,8S)-7,8-diammoniononanoate + CO2 + ATP = (4R,5S)-dethiobiotin + ADP + phosphate + 3 H(+). The protein operates within cofactor biosynthesis; biotin biosynthesis; biotin from 7,8-diaminononanoate: step 1/2. Functionally, catalyzes a mechanistically unusual reaction, the ATP-dependent insertion of CO2 between the N7 and N8 nitrogen atoms of 7,8-diaminopelargonic acid (DAPA, also called 7,8-diammoniononanoate) to form a ureido ring. The polypeptide is ATP-dependent dethiobiotin synthetase BioD (Corynebacterium kroppenstedtii (strain DSM 44385 / JCM 11950 / CIP 105744 / CCUG 35717)).